Here is a 521-residue protein sequence, read N- to C-terminus: Glutamyl-tRNA(Gln) amidotransferase subunit A (521 aa).

Active-site charge relay system residues include K79 and S187. S211 acts as the Acyl-ester intermediate in catalysis.

Belongs to the amidase family. GatA subfamily. In terms of assembly, heterotrimer of A, B and C subunits.

The catalysed reaction is L-glutamyl-tRNA(Gln) + L-glutamine + ATP + H2O = L-glutaminyl-tRNA(Gln) + L-glutamate + ADP + phosphate + H(+). Its function is as follows. Allows the formation of correctly charged Gln-tRNA(Gln) through the transamidation of misacylated Glu-tRNA(Gln) in organisms which lack glutaminyl-tRNA synthetase. The reaction takes place in the presence of glutamine and ATP through an activated gamma-phospho-Glu-tRNA(Gln). The chain is Glutamyl-tRNA(Gln) amidotransferase subunit A from Mesorhizobium japonicum (strain LMG 29417 / CECT 9101 / MAFF 303099) (Mesorhizobium loti (strain MAFF 303099)).